Consider the following 457-residue polypeptide: Subtilisin-like serine protease Pen c 2 (457 aa).

Residues 1 to 16 (MKGFLGLALLPLLTAA) form the signal peptide. The propeptide at 17-136 (SPVSVESIHN…IEKDSEVHHF (120 aa)) is removed in mature form. Positions 43-134 (SYIVVFKKHV…DYIEKDSEVH (92 aa)) constitute an Inhibitor I9 domain. One can recognise a Peptidase S8 domain in the interval 146-457 (PWGLARISHR…YTDIVAQGGY (312 aa)). Active-site charge relay system residues include D182 and H214. N244 and N284 each carry an N-linked (GlcNAc...) asparagine glycan. Residue S380 is the Charge relay system of the active site. N447 carries an N-linked (GlcNAc...) asparagine glycan.

Belongs to the peptidase S8 family.

Its function is as follows. Serine protease. This Penicillium citrinum protein is Subtilisin-like serine protease Pen c 2.